Here is a 429-residue protein sequence, read N- to C-terminus: Endoglucanase A (429 aa).

Residues 1-34 form the signal peptide; the sequence is MVSKKQKFLTVILVIVLAIVIVGGVFGISFVKGR. A compositionally biased stretch (basic and acidic residues) spans 46-94; sequence AKTEQVKEPAKEEPKLVIKEKKQDESAKKEQELKKAKEEAEAAVEKETE. The interval 46 to 100 is disordered; that stretch reads AKTEQVKEPAKEEPKLVIKEKKQDESAKKEQELKKAKEEAEAAVEKETEKTEEEP. The active-site Proton donor is Glu-249. Glu-334 serves as the catalytic Nucleophile.

Belongs to the glycosyl hydrolase 5 (cellulase A) family.

It catalyses the reaction Endohydrolysis of (1-&gt;4)-beta-D-glucosidic linkages in cellulose, lichenin and cereal beta-D-glucans.. The sequence is that of Endoglucanase A (celA) from Butyrivibrio fibrisolvens.